We begin with the raw amino-acid sequence, 399 residues long: Phosphoglycerate kinase (399 aa).

Residues 22 to 24, Arg37, 60 to 63, Arg119, and Arg152 contribute to the substrate site; these read DLN and HFGR. ATP contacts are provided by residues Lys202, Glu324, and 354 to 357; that span reads GGDT.

The protein belongs to the phosphoglycerate kinase family. As to quaternary structure, monomer.

Its subcellular location is the cytoplasm. It carries out the reaction (2R)-3-phosphoglycerate + ATP = (2R)-3-phospho-glyceroyl phosphate + ADP. It participates in carbohydrate degradation; glycolysis; pyruvate from D-glyceraldehyde 3-phosphate: step 2/5. The protein is Phosphoglycerate kinase of Rhizobium meliloti (strain 1021) (Ensifer meliloti).